The sequence spans 451 residues: Cyclin-dependent kinase 18 (451 aa).

The interval 39–61 (RNEDGRDEPGQLSPGVQYQQRQN) is disordered. A Phosphoserine modification is found at Ser-51. The span at 52 to 61 (PGVQYQQRQN) shows a compositional bias: polar residues. A phosphoserine mark is found at Ser-66 and Ser-109. A Protein kinase domain is found at 121 to 402 (YVKLDKLGEG…AEAALSHPYF (282 aa)). Residues 127–135 (LGEGTYATV) and Lys-150 contribute to the ATP site. Asp-242 acts as the Proton acceptor in catalysis. Phosphoserine occurs at positions 417 and 420.

Belongs to the protein kinase superfamily. CMGC Ser/Thr protein kinase family. CDC2/CDKX subfamily. In brain, kidney, intestine and at a much lower level, in fetal tissues.

It carries out the reaction L-seryl-[protein] + ATP = O-phospho-L-seryl-[protein] + ADP + H(+). The catalysed reaction is L-threonyl-[protein] + ATP = O-phospho-L-threonyl-[protein] + ADP + H(+). In terms of biological role, may play a role in signal transduction cascades in terminally differentiated cells. This is Cyclin-dependent kinase 18 (Cdk18) from Rattus norvegicus (Rat).